A 314-amino-acid chain; its full sequence is Ribosomal protein L11 methyltransferase (314 aa).

S-adenosyl-L-methionine contacts are provided by Thr161, Gly182, Asp204, and Asn248.

Belongs to the methyltransferase superfamily. PrmA family.

It localises to the cytoplasm. The enzyme catalyses L-lysyl-[protein] + 3 S-adenosyl-L-methionine = N(6),N(6),N(6)-trimethyl-L-lysyl-[protein] + 3 S-adenosyl-L-homocysteine + 3 H(+). In terms of biological role, methylates ribosomal protein L11. This Listeria monocytogenes serotype 4a (strain HCC23) protein is Ribosomal protein L11 methyltransferase.